The chain runs to 218 residues: Adenylate kinase (218 aa).

Position 10–15 (10–15 (GAGKGT)) interacts with ATP. Residues 30-59 (STGDMLRAAVKEGSELGLKVKEIMNSGGLV) form an NMP region. Residues T31, R36, 57–59 (GLV), 85–88 (GFPR), and Q92 each bind AMP. The interval 122-159 (GRRVHPGSGRVYHVDYNPPKEEGKDDVTGEALIQRDDD) is LID. ATP-binding positions include R123 and 132–133 (VY). R156 and R167 together coordinate AMP. Position 203 (G203) interacts with ATP.

Belongs to the adenylate kinase family. In terms of assembly, monomer.

Its subcellular location is the cytoplasm. The enzyme catalyses AMP + ATP = 2 ADP. Its pathway is purine metabolism; AMP biosynthesis via salvage pathway; AMP from ADP: step 1/1. Its function is as follows. Catalyzes the reversible transfer of the terminal phosphate group between ATP and AMP. Plays an important role in cellular energy homeostasis and in adenine nucleotide metabolism. The protein is Adenylate kinase of Chromohalobacter salexigens (strain ATCC BAA-138 / DSM 3043 / CIP 106854 / NCIMB 13768 / 1H11).